A 354-amino-acid chain; its full sequence is Tsukushi (354 aa).

A signal peptide spans 1-17 (MLCSLFLLLLAVGRVQT). Residues 18–59 (TRPCFPGCQCEEETFGLFDSFSLIRVDCSSLGPHIVPVPIPL) enclose the LRRNT domain. 10 LRR repeats span residues 60–81 (DTAHLDLSSNRLETVNESVLAG), 86–107 (TLAGLDLSYNLLTSIMPSAFSR), 110–131 (YLESLDLSHNGLAALPAEIFTS), 133–154 (PLSDINLSHNRLREVSISAFTT), 160–180 (ALHVDLSHNLIHRLLPHPARA), 186–207 (TIQSLNLSWNRFRAVPDLRDLP), 208–228 (LRYLSLDGNPLATINPDAFMG), 231–253 (GLTHLSLASLQGILHLPPHGFRE), 256–277 (GLQVLDLSGNPKLKWAGAEVFS), and 281–302 (LLQELDLSGSSLVPLPEMLLHH). N75 carries an N-linked (GlcNAc...) asparagine glycan. A glycan (N-linked (GlcNAc...) asparagine) is linked at N138. N-linked (GlcNAc...) asparagine glycosylation occurs at N191.

As to quaternary structure, interacts with FZD4 (via FZ domain); competes with WNT2B for binding to FZD4, inhibiting Wnt signaling and repressing peripheral eye development. Interacts with TGFB1; the interaction contributes to regulation of the hair cycle. Interacts with netrin. Interacts with CCN2. Expressed in macrophages in inflamed wounds with wound expression starting 2 days post-wounding (dpw) (at protein level). At 7 dpw, expressed from epidermis and extracellular matrix in the wound edge to neoepidermis and granulation tissue and in panniculus carnosus under the granulation tissue (at protein level). After fibrosis, disappears in the dermal area at 11 dpw (at protein level). Expressed in the hair follicle during morphogenesis and the hair cycle (at protein level). In embryonic brain, strong expression in the olfactory bulb, anterior olfactory nucleus, neocortex, piriform cortex, glial wedge, midline zipper glia, indusium griseum and the area surrounding the anterior commissure (AC) but not on AC axons (at protein level). In the adult eye, expressed in retinal layers, lens epithelium, and ciliary body where it is expressed predominantly in the inner non-pigmented layer. Expressed in almost all brain regions in the embryo, in the cortex and the lateral ventricle at P0 and is restricted to the subventricular zone and lateral nucleus of the amygdala in adults. Prominent expression in hippocampal regions from early postnatal stages until postnatal day 15 and gradually declines at later stages. Expressed in almost all bone regions in the femurs of juveniles. In the inner ear, accumulates in nonprosensory regions during early embryonic stages and in both nonprosensory and prosensory regions in late embryonic stages. In the adult ear, expressed in the organ of Corti, spiral ganglion cells, and the stria vascularis. Highly expressed in the liver where it is detected primarily in hepatocytes but not in non-parenchymal cells.

Its subcellular location is the secreted. In terms of biological role, contributes to various developmental events and other processes such as wound healing and cholesterol homeostasis through its interactions with multiple signaling pathways. Wnt signaling inhibitor which competes with WNT2B for binding to Wnt receptor FZD4 and represses WNT2B-dependent development of the peripheral eye. Plays a role in regulating the hair cycle by controlling TGFB1 signaling. Required for the development of the anterior commissure in the brain by inhibiting neurite outgrowth. Essential for terminal differentiation of hippocampal neural stem cells. Plays a role in regulating bone elongation and bone mass by modulating growth plate chondrocyte function and overall body size. Required for development of the inner ear through its involvement in stereocilia formation in inner hair cells. Facilitates wound healing by inhibiting secretion of TGFB1 from macrophages which prevents myofibroblast differentiation, maintaining inflammatory cell quiescence. Plays a role in cholesterol homeostasis by reducing circulating high-density lipoprotein cholesterol, lowering cholesterol efflux capacity and decreasing cholesterol-to-bile acid conversion in the liver. In one study, shown to negatively regulate sympathetic innervation in brown fat, leading to reduced energy expenditure. In another study, shown not to affect brown fat thermogenic capacity, body weight gain or glucose homeostasis. This is Tsukushi from Mus musculus (Mouse).